A 198-amino-acid chain; its full sequence is Protein GrpE (198 aa).

A disordered region spans residues 1-58 (MTEKDQSVNNEEFAEKEDNTAKDSNTDEQIEKTASEDDVQNDSSAVDDKEKEIQQLKE). Basic and acidic residues-rich tracts occupy residues 16–35 (KEDN…KTAS) and 46–58 (VDDK…QLKE).

This sequence belongs to the GrpE family. As to quaternary structure, homodimer.

The protein localises to the cytoplasm. In terms of biological role, participates actively in the response to hyperosmotic and heat shock by preventing the aggregation of stress-denatured proteins, in association with DnaK and GrpE. It is the nucleotide exchange factor for DnaK and may function as a thermosensor. Unfolded proteins bind initially to DnaJ; upon interaction with the DnaJ-bound protein, DnaK hydrolyzes its bound ATP, resulting in the formation of a stable complex. GrpE releases ADP from DnaK; ATP binding to DnaK triggers the release of the substrate protein, thus completing the reaction cycle. Several rounds of ATP-dependent interactions between DnaJ, DnaK and GrpE are required for fully efficient folding. This Staphylococcus carnosus (strain TM300) protein is Protein GrpE.